We begin with the raw amino-acid sequence, 469 residues long: Glutamine synthetase (469 aa).

Residues 16 to 100 (EGVQYVDLRF…MICDIYDPVT (85 aa)) enclose the GS beta-grasp domain. The region spanning 108-469 (TRYIAQKAEQ…PKEFELYWDI (362 aa)) is the GS catalytic domain. Positions 133 and 135 each coordinate Mg(2+). An ATP-binding site is contributed by Glu-207. Residues Glu-212 and Glu-220 each contribute to the Mg(2+) site. L-glutamate is bound by residues 264-265 (NG) and Gly-265. His-269 is a binding site for Mg(2+). ATP contacts are provided by residues 271–273 (HFS) and Ser-273. L-glutamate-binding residues include Arg-321, Glu-327, and Arg-339. Residues Arg-339, Arg-344, and Lys-353 each coordinate ATP. Residue Glu-358 participates in Mg(2+) binding. An L-glutamate-binding site is contributed by Arg-360. O-AMP-tyrosine is present on Tyr-398.

Belongs to the glutamine synthetase family. In terms of assembly, oligomer of 12 subunits arranged in the form of two hexagons. The cofactor is Mg(2+).

It is found in the cytoplasm. It carries out the reaction L-glutamate + NH4(+) + ATP = L-glutamine + ADP + phosphate + H(+). With respect to regulation, the activity of this enzyme could be controlled by adenylation under conditions of abundant glutamine. Its function is as follows. Catalyzes the ATP-dependent biosynthesis of glutamine from glutamate and ammonia. The polypeptide is Glutamine synthetase (Aquifex aeolicus (strain VF5)).